Reading from the N-terminus, the 197-residue chain is uncharacterized protein (197 aa).

Residues 1–23 (MSARAPKELRLALPPCLLNRTFA) form the signal peptide. 2 N-linked (GlcNAc...) asparagine glycosylation sites follow: asparagine 19 and asparagine 26. Residues 24–61 (SPNASGSGNTGARGPGAGGSGTCITQVGQQLFQSFSST) lie on the Extracellular side of the membrane. Residues 62 to 82 (LVLIVLVTLIFCLIVLSLSTF) traverse the membrane as a helical segment. Residues 83–197 (HIHKRRMKKR…EGLLQTVVLS (115 aa)) are Cytoplasmic-facing. Residues 94–180 (MQRAQEEYER…SSPQGAHAAS (87 aa)) form a disordered region. Basic and acidic residues-rich tracts occupy residues 96–107 (RAQEEYERDHCS) and 125–136 (HTKETRLERQPR). Residues 147-161 (SSSSSSSPGLLCQGP) are compositionally biased toward low complexity. Residues 162–171 (CAPPPPPPAS) show a composition bias toward pro residues.

The protein resides in the membrane. This is an uncharacterized protein from Macaca fascicularis (Crab-eating macaque).